The chain runs to 510 residues: Propionyl-CoA carboxylase beta chain (510 aa).

Positions 1-257 (MKDILEQLED…NNREKPPVRP (257 aa)) constitute a CoA carboxyltransferase N-terminal domain. Residues 1 to 504 (MKDILEQLED…NKSVQMPWKK (504 aa)) are carboxyltransferase. One can recognise a CoA carboxyltransferase C-terminal domain in the interval 261-504 (DPDRIEPSLD…NKSVQMPWKK (244 aa)). Positions 292–325 (DEGDFYEIQEEFAKNIITGFIRLEGRTVGVVANQ) are acyl-CoA binding.

It belongs to the AccD/PCCB family. As to quaternary structure, the holoenzyme is a dodecamer composed of 6 PccA/alpha subunits and 6 PccB/beta subunits.

It carries out the reaction propanoyl-CoA + hydrogencarbonate + ATP = (S)-methylmalonyl-CoA + ADP + phosphate + H(+). It functions in the pathway metabolic intermediate metabolism; propanoyl-CoA degradation; succinyl-CoA from propanoyl-CoA: step 1/3. This is one of the 2 subunits of the biotin-dependent propionyl-CoA carboxylase (PCC), the enzyme catalyzing the carboxylation of propionyl-CoA/propanoyl-CoA to D-methylmalonyl-CoA/(S)-methylmalonyl-CoA. Within the holoenzyme, the alpha subunit catalyzes the ATP-dependent carboxylation of the biotin carried by the biotin carboxyl carrier (BCC) domain, while the beta subunit then tranfers the carboxyl group from carboxylated biotin to propionyl-CoA. This chain is Propionyl-CoA carboxylase beta chain, found in Roseobacter denitrificans (strain ATCC 33942 / OCh 114) (Erythrobacter sp. (strain OCh 114)).